A 435-amino-acid polypeptide reads, in one-letter code: Monodehydroascorbate reductase 4, cytosolic (435 aa).

Residues Gly-14–Ala-17, Glu-41, Arg-48, Lys-53, Ile-96, and Arg-147–Asp-148 each bind FAD. NAD(+) contacts are provided by residues Gly-172–Glu-178, Glu-196, Arg-202, and Gly-261. Tyr-174 to Glu-178 contacts NADP(+). Residues Arg-202 and Gly-261 each contribute to the NADP(+) site. Asp-298 contacts FAD. Glu-314 to His-315 contacts NAD(+). Glu-314–His-315 contacts NADP(+). Val-316 lines the FAD pocket. Residue Arg-320 participates in L-ascorbate binding. Tyr-349 provides a ligand contact to FAD. An NAD(+)-binding site is contributed by Tyr-349. NADP(+) is bound at residue Tyr-349. Residue Arg-351 participates in L-ascorbate binding.

This sequence belongs to the FAD-dependent oxidoreductase family. Requires FAD as cofactor. Expressed in anthers.

It is found in the cytoplasm. It catalyses the reaction 2 monodehydro-L-ascorbate radical + NADH + H(+) = 2 L-ascorbate + NAD(+). Catalyzes the conversion of monodehydroascorbate to ascorbate, oxidizing NADH in the process. Ascorbate is a major antioxidant against reactive oxygen species (ROS) and nitric oxide (NO). The chain is Monodehydroascorbate reductase 4, cytosolic from Oryza sativa subsp. japonica (Rice).